A 681-amino-acid polypeptide reads, in one-letter code: UvrABC system protein B (681 aa).

A Helicase ATP-binding domain is found at 30 to 419 (QGVRDGRHWQ…GEVVELLVRP (390 aa)). 43 to 50 (GVTGSGKT) contacts ATP. Residues 96–119 (YYDFYQPEAYLPSLDKYIAKDLRI) carry the Beta-hairpin motif. The Helicase C-terminal domain maps to 435-601 (QIDNLLAEIR…SIVKSVDQIL (167 aa)). Residues 641–676 (YAIVEGLRLEMQEAAEHMEYEKAAYLRDEITKMEQV) enclose the UVR domain.

It belongs to the UvrB family. Forms a heterotetramer with UvrA during the search for lesions. Interacts with UvrC in an incision complex.

The protein resides in the cytoplasm. In terms of biological role, the UvrABC repair system catalyzes the recognition and processing of DNA lesions. A damage recognition complex composed of 2 UvrA and 2 UvrB subunits scans DNA for abnormalities. Upon binding of the UvrA(2)B(2) complex to a putative damaged site, the DNA wraps around one UvrB monomer. DNA wrap is dependent on ATP binding by UvrB and probably causes local melting of the DNA helix, facilitating insertion of UvrB beta-hairpin between the DNA strands. Then UvrB probes one DNA strand for the presence of a lesion. If a lesion is found the UvrA subunits dissociate and the UvrB-DNA preincision complex is formed. This complex is subsequently bound by UvrC and the second UvrB is released. If no lesion is found, the DNA wraps around the other UvrB subunit that will check the other stand for damage. In Chlorobium chlorochromatii (strain CaD3), this protein is UvrABC system protein B.